Reading from the N-terminus, the 150-residue chain is Large ribosomal subunit protein bL9 (150 aa).

This sequence belongs to the bacterial ribosomal protein bL9 family.

Functionally, binds to the 23S rRNA. The sequence is that of Large ribosomal subunit protein bL9 from Alcanivorax borkumensis (strain ATCC 700651 / DSM 11573 / NCIMB 13689 / SK2).